Here is a 379-residue protein sequence, read N- to C-terminus: Probable protein phosphatase 2C 46 (379 aa).

The signal sequence occupies residues 1–20 (MLSTLMKLLSACLWPSSSSG). Residues 42–353 (LVGEFSMAVV…DDITVVIIFL (312 aa)) enclose the PPM-type phosphatase domain. S73 carries the phosphoserine modification. Mn(2+) is bound by residues D84, G85, D285, and D344.

The protein belongs to the PP2C family. In terms of assembly, interacts with SAUR19. It depends on Mg(2+) as a cofactor. The cofactor is Mn(2+).

The enzyme catalyses O-phospho-L-seryl-[protein] + H2O = L-seryl-[protein] + phosphate. The catalysed reaction is O-phospho-L-threonyl-[protein] + H2O = L-threonyl-[protein] + phosphate. Its function is as follows. May dephosphorylate and repress plasma membrane H(+)-ATPases (PM H(+)-ATPases, e.g. AHA1 and AHA2), thus influencing negatively plant growth and fitness. The protein is Probable protein phosphatase 2C 46 of Arabidopsis thaliana (Mouse-ear cress).